The sequence spans 898 residues: Protein SOV1, mitochondrial (898 aa).

The N-terminal 31 residues, methionine 1 to tyrosine 31, are a transit peptide targeting the mitochondrion.

The protein resides in the mitochondrion. This Saccharomyces cerevisiae (strain ATCC 204508 / S288c) (Baker's yeast) protein is Protein SOV1, mitochondrial (SOV1).